The chain runs to 208 residues: Ribosomal RNA large subunit methyltransferase E (208 aa).

The S-adenosyl-L-methionine site is built by glycine 63, tryptophan 65, aspartate 83, aspartate 99, and aspartate 124. Lysine 164 acts as the Proton acceptor in catalysis.

The protein belongs to the class I-like SAM-binding methyltransferase superfamily. RNA methyltransferase RlmE family.

Its subcellular location is the cytoplasm. The enzyme catalyses uridine(2552) in 23S rRNA + S-adenosyl-L-methionine = 2'-O-methyluridine(2552) in 23S rRNA + S-adenosyl-L-homocysteine + H(+). Its function is as follows. Specifically methylates the uridine in position 2552 of 23S rRNA at the 2'-O position of the ribose in the fully assembled 50S ribosomal subunit. In Alcanivorax borkumensis (strain ATCC 700651 / DSM 11573 / NCIMB 13689 / SK2), this protein is Ribosomal RNA large subunit methyltransferase E.